We begin with the raw amino-acid sequence, 569 residues long: Urease subunit beta (569 aa).

Residues 131 to 569 enclose the Urease domain; sequence GGIDTHIHFI…VSLGQLYCLF (439 aa). His-136, His-138, and Lys-219 together coordinate Ni(2+). Lys-219 bears the N6-carboxylysine mark. Substrate is bound at residue His-221. Ni(2+)-binding residues include His-248 and His-274. His-322 (proton donor) is an active-site residue. Asp-362 is a Ni(2+) binding site.

Belongs to the metallo-dependent hydrolases superfamily. Urease alpha subunit family. As to quaternary structure, heterohexamer of 3 UreA (alpha) and 3 UreB (beta) subunits. Requires Ni cation as cofactor. In terms of processing, carboxylation allows a single lysine to coordinate two nickel ions.

The protein resides in the cytoplasm. The enzyme catalyses urea + 2 H2O + H(+) = hydrogencarbonate + 2 NH4(+). Its pathway is nitrogen metabolism; urea degradation; CO(2) and NH(3) from urea (urease route): step 1/1. In Helicobacter hepaticus (strain ATCC 51449 / 3B1), this protein is Urease subunit beta.